A 513-amino-acid polypeptide reads, in one-letter code: Bifunctional purine biosynthesis protein PurH (513 aa).

One can recognise an MGS-like domain in the interval 1-145 (MNKRAIISVY…KNFKYTTVIV (145 aa)).

It belongs to the PurH family.

It catalyses the reaction (6R)-10-formyltetrahydrofolate + 5-amino-1-(5-phospho-beta-D-ribosyl)imidazole-4-carboxamide = 5-formamido-1-(5-phospho-D-ribosyl)imidazole-4-carboxamide + (6S)-5,6,7,8-tetrahydrofolate. It carries out the reaction IMP + H2O = 5-formamido-1-(5-phospho-D-ribosyl)imidazole-4-carboxamide. Its pathway is purine metabolism; IMP biosynthesis via de novo pathway; 5-formamido-1-(5-phospho-D-ribosyl)imidazole-4-carboxamide from 5-amino-1-(5-phospho-D-ribosyl)imidazole-4-carboxamide (10-formyl THF route): step 1/1. It functions in the pathway purine metabolism; IMP biosynthesis via de novo pathway; IMP from 5-formamido-1-(5-phospho-D-ribosyl)imidazole-4-carboxamide: step 1/1. The sequence is that of Bifunctional purine biosynthesis protein PurH from Caldicellulosiruptor bescii (strain ATCC BAA-1888 / DSM 6725 / KCTC 15123 / Z-1320) (Anaerocellum thermophilum).